The following is a 156-amino-acid chain: MSRRGNIKRRPVPPDPVYNSRLISMTIRRVMKSGKKSVAAGIMYDALTSIGEKTGSDPLEVFEKAIKNLTPLVEVKARRVGGATYQVPMEVRSSRGTTLALRWLVHYARIRGGRTMSSKLANEIMDAANETGGAMKKRDETHRMAEANKAFAHYRY.

This sequence belongs to the universal ribosomal protein uS7 family. In terms of assembly, part of the 30S ribosomal subunit. Contacts proteins S9 and S11.

Functionally, one of the primary rRNA binding proteins, it binds directly to 16S rRNA where it nucleates assembly of the head domain of the 30S subunit. Is located at the subunit interface close to the decoding center, probably blocks exit of the E-site tRNA. This is Small ribosomal subunit protein uS7 from Rippkaea orientalis (strain PCC 8801 / RF-1) (Cyanothece sp. (strain PCC 8801)).